A 338-amino-acid chain; its full sequence is Large ribosomal subunit protein uL10 (338 aa).

Positions 295–338 are disordered; the sequence is EVPTIQPTTPPEKKEEEEKKEEEEEEAETVSEEELAEGLGALFG. A compositionally biased stretch (acidic residues) spans 312–330; it reads EKKEEEEEEAETVSEEELA.

This sequence belongs to the universal ribosomal protein uL10 family. Part of the 50S ribosomal subunit. Forms part of the ribosomal stalk which helps the ribosome interact with GTP-bound translation factors. Forms a heptameric L10(L12)2(L12)2(L12)2 complex, where L10 forms an elongated spine to which the L12 dimers bind in a sequential fashion.

Its function is as follows. Forms part of the ribosomal stalk, playing a central role in the interaction of the ribosome with GTP-bound translation factors. The sequence is that of Large ribosomal subunit protein uL10 from Staphylothermus marinus (strain ATCC 43588 / DSM 3639 / JCM 9404 / F1).